The sequence spans 432 residues: ATP-dependent RNA helicase RhlB (432 aa).

Residues 9-37 (QNFADLGLQPQVIDGLNAKGFIKCTPIQA) carry the Q motif motif. The 180-residue stretch at 40-219 (LPVLLAGQDI…FEHMQEPEHV (180 aa)) folds into the Helicase ATP-binding domain. 53-60 (AQTGTGKT) is an ATP binding site. The DEAD box signature appears at 165–168 (DEAD). A Helicase C-terminal domain is found at 245–390 (ALLQTLIEEE…QSDYDASALL (146 aa)). Residues 396–432 (PLRLQRRPQQNRRNNNGQRQGGNRKHTRPRQPRNTQS) form a disordered region. Residues 417 to 426 (GNRKHTRPRQ) show a composition bias toward basic residues.

This sequence belongs to the DEAD box helicase family. RhlB subfamily. Component of the RNA degradosome, which is a multiprotein complex involved in RNA processing and mRNA degradation.

The protein resides in the cytoplasm. It catalyses the reaction ATP + H2O = ADP + phosphate + H(+). Functionally, DEAD-box RNA helicase involved in RNA degradation. Has RNA-dependent ATPase activity and unwinds double-stranded RNA. This chain is ATP-dependent RNA helicase RhlB, found in Aliivibrio fischeri (strain ATCC 700601 / ES114) (Vibrio fischeri).